A 329-amino-acid chain; its full sequence is DNA-directed RNA polymerase subunit alpha (329 aa).

The alpha N-terminal domain (alpha-NTD) stretch occupies residues 1-235; the sequence is MQGSVTEFLK…EQLDAFVDLR (235 aa). An alpha C-terminal domain (alpha-CTD) region spans residues 249 to 329; sequence FDPILLRPVD…NWPPASIAED (81 aa).

The protein belongs to the RNA polymerase alpha chain family. Homodimer. The RNAP catalytic core consists of 2 alpha, 1 beta, 1 beta' and 1 omega subunit. When a sigma factor is associated with the core the holoenzyme is formed, which can initiate transcription.

It catalyses the reaction RNA(n) + a ribonucleoside 5'-triphosphate = RNA(n+1) + diphosphate. Functionally, DNA-dependent RNA polymerase catalyzes the transcription of DNA into RNA using the four ribonucleoside triphosphates as substrates. The sequence is that of DNA-directed RNA polymerase subunit alpha from Aliivibrio fischeri (strain ATCC 700601 / ES114) (Vibrio fischeri).